The following is a 728-amino-acid chain: MSDRIDRDVINALIAGHFADPFSVLGMHQTTAGLEVRALLPDATEVWVIEPKTGRKVGKLECIDSRGFFSGVLPRRKNFFRYQLAVVWHGQQNLIDDPYRFGPLIQEMDAWLLSEGTHLRPYETLGAHADTMDGVTGTRFSVWAPNAQRVSVVGQFNYWDGRRHPMRLRKESGIWELFIPGAQHGQLYKFEMIDAHGKLRIKADPYAFEAQMRPETASLICGLPEKVVQTEERKQANRFDAPVSIYEVHLGSWRRHTDNNFWLSYRELADQLIPYVKWMGFTHLELLPVNEHPFDGSWGYQPTGLYAPTRRFGTRDDFRYFINAAHQAGLNVILDWVPGHFPSDDFGLADFDGTKLYEHSDPREGYHQDWNTLIYNYGRREVSNYLVGNALYWIERFGIDALRVDAVASMIYRDYSRKEGEWIPNEFGGRENLEAIEFLRNTNRILGEQVSGAVSMAEESTDFAGVSRPQDMGGLGFWYKWNLGWMHDTLDYMKLDPVHRQYHHDKLTFGMLYNYTENFVLPLSHDEVVHGKKSILDRMPGDAWQKFANLRAYYGWMWAFPGKKLLFMGNEFAQGREWNHDASLDWHLLEGGDNWHHGVQRLVRDLNHTYRHHKALHELDFDAYGFEWLVVDDNERSVLIFVRRDKVGNEIIVASNFTPVPRHDYRFGINQPGKWREIVNTDSMHYHGSNTGNGGVVHSDEIASHGRQHSLSLTLPPLATIWLVREGE.

The active-site Nucleophile is the Asp405. Glu458 (proton donor) is an active-site residue.

This sequence belongs to the glycosyl hydrolase 13 family. GlgB subfamily. In terms of assembly, monomer.

The catalysed reaction is Transfers a segment of a (1-&gt;4)-alpha-D-glucan chain to a primary hydroxy group in a similar glucan chain.. Its pathway is glycan biosynthesis; glycogen biosynthesis. Functionally, catalyzes the formation of the alpha-1,6-glucosidic linkages in glycogen by scission of a 1,4-alpha-linked oligosaccharide from growing alpha-1,4-glucan chains and the subsequent attachment of the oligosaccharide to the alpha-1,6 position. The polypeptide is 1,4-alpha-glucan branching enzyme GlgB (Citrobacter koseri (strain ATCC BAA-895 / CDC 4225-83 / SGSC4696)).